The following is a 184-amino-acid chain: Potassium-transporting ATPase KdpC subunit (184 aa).

The helical transmembrane segment at 6–26 threads the bilayer; it reads TAVLYTIISAVFLGLGYPLIM.

Belongs to the KdpC family. The system is composed of three essential subunits: KdpA, KdpB and KdpC.

Its subcellular location is the cell inner membrane. In terms of biological role, part of the high-affinity ATP-driven potassium transport (or Kdp) system, which catalyzes the hydrolysis of ATP coupled with the electrogenic transport of potassium into the cytoplasm. This subunit acts as a catalytic chaperone that increases the ATP-binding affinity of the ATP-hydrolyzing subunit KdpB by the formation of a transient KdpB/KdpC/ATP ternary complex. The polypeptide is Potassium-transporting ATPase KdpC subunit (Acidobacterium capsulatum (strain ATCC 51196 / DSM 11244 / BCRC 80197 / JCM 7670 / NBRC 15755 / NCIMB 13165 / 161)).